The sequence spans 118 residues: Small ribosomal subunit protein uS13 (118 aa).

The interval 94–118 (SLPLRGQRTKTNARTRKGPRKPIRK) is disordered.

It belongs to the universal ribosomal protein uS13 family. Part of the 30S ribosomal subunit. Forms a loose heterodimer with protein S19. Forms two bridges to the 50S subunit in the 70S ribosome.

Its function is as follows. Located at the top of the head of the 30S subunit, it contacts several helices of the 16S rRNA. In the 70S ribosome it contacts the 23S rRNA (bridge B1a) and protein L5 of the 50S subunit (bridge B1b), connecting the 2 subunits; these bridges are implicated in subunit movement. Contacts the tRNAs in the A and P-sites. The polypeptide is Small ribosomal subunit protein uS13 (Shewanella denitrificans (strain OS217 / ATCC BAA-1090 / DSM 15013)).